The chain runs to 303 residues: MRVALLMGGVSREREISLRSGERVKKALEKLGYEHTVFDVREDFLKKVDQLKSFDVVFNVLHGTFGEDGTLQAILDFLGIRYTGSDAFSSMICFDKLVTYRFLKGTVEIPDFVEIKEFMKTSPLGYPCVVKPRREGSSIGVFVCESDEEFQHALKEDLPRYGSVIVQKYIPGREMTVSILETEKGFEILPVLELRPKRRFYDYVAKYTKGETEFILPAPLNPSEERLVKEMALKAFVEAGCRGFGRVDGIFSDGRFYFLEINTVPGLTETSDLPASAKAGGIEFEELVEIILKSAFLKEGVRV.

Positions 99 to 293 (TYRFLKGTVE…FEELVEIILK (195 aa)) constitute an ATP-grasp domain. ATP is bound at residue 125–176 (GYPCVVKPRREGSSIGVFVCESDEEFQHALKEDLPRYGSVIVQKYIPGREMT). 3 residues coordinate Mg(2+): D248, E260, and N262.

Belongs to the D-alanine--D-alanine ligase family. The cofactor is Mg(2+). Requires Mn(2+) as cofactor.

It is found in the cytoplasm. The enzyme catalyses 2 D-alanine + ATP = D-alanyl-D-alanine + ADP + phosphate + H(+). The protein operates within cell wall biogenesis; peptidoglycan biosynthesis. In terms of biological role, cell wall formation. This Thermotoga maritima (strain ATCC 43589 / DSM 3109 / JCM 10099 / NBRC 100826 / MSB8) protein is D-alanine--D-alanine ligase.